The chain runs to 463 residues: MLLTLKNTGQLLVAACSKVARSLAKYHPRVNHHRHCVWCSKRGLTTGGTAQKQDILFHLCQQRHFLSGETLTCTSLVQGCHNLGPLGVELKRNLVAQWWNSVVVYREQVLGIDTLHHLSTPSSAPEKPLLAICTQHLKELPRDQLVKWLEDPAGKLEFLRHELLYGALLEYVPSMELLNKKMPFGLAEIGKCFHSIPEERNKGTILPRIGERTVASLVWFSSPKSSGQWQDYWLRQRLQWWQKFAQSPSGFSCNDIQDGQGRKSSLIQYEFPWGRETIETLCNMDDSALFQMHPGCTTKLQARDGRKSVVPHVVWVSGDLDRGILAYLSDALQQTEAPAVRGQYHQREVLKLHPTLAPIKVAVDMGKGPTGELRLVCQGLSSELREQGVYVWPGYQETLHGSLEQLYTKYDKMGVLFTVLVSESTLENGLLQVRSRDTTLKETIHVSKVKDFLVRYIAAAGNL.

The N-terminal 44 residues, Met-1–Leu-44, are a transit peptide targeting the mitochondrion.

As to quaternary structure, heterotrimer composed of a catalytic subunit and a homodimer of accessory subunits.

The protein localises to the mitochondrion. Functionally, mitochondrial polymerase processivity subunit. It regulates the polymerase and exonuclease activities promoting processive DNA synthesis. Binds to ss-DNA. This Xenopus laevis (African clawed frog) protein is DNA polymerase subunit gamma-2, mitochondrial (polg2).